Here is a 276-residue protein sequence, read N- to C-terminus: Secretagogin (276 aa).

EF-hand domains lie at 12–47, 58–93, 105–140, 149–184, 197–232, and 240–276; these read LDAACFWQIWQRFDKEEKGYIRETELDAFFDHLLAK, NVQKVKEQLMTSHNVSKEGRILMKELASMFLSEDEN, DNSVEFMQIWRKYDADSSGFISAAELCNFLRDLFLH, ELEEYTSTMMKIFDKNKDGRLDLNDLARILALQENF, ERKRDFEKIFAHYDVSKTGALEGPEVDGFVKDMMEL, and VDLDKFREILLRHCDVNKDGKIQKSELALCLGLKINP. Ca(2+) is bound by residues aspartate 25, tyrosine 31, glutamate 36, serine 73, glutamate 75, arginine 77, glutamate 82, aspartate 118, aspartate 120, serine 122, glutamate 129, aspartate 162, asparagine 164, aspartate 166, arginine 168, aspartate 173, aspartate 210, serine 212, threonine 214, glutamate 221, aspartate 254, asparagine 256, aspartate 258, lysine 260, and glutamate 265.

Its subcellular location is the cytoplasm. It localises to the secreted. The protein resides in the cytoplasmic vesicle. It is found in the secretory vesicle membrane. The sequence is that of Secretagogin (Scgn) from Mus musculus (Mouse).